An 876-amino-acid polypeptide reads, in one-letter code: AP-5 complex subunit beta-1 (876 aa).

In terms of assembly, probably part of the adaptor protein complex 5 (AP-5), a tetramer composed of AP5B1, AP5M1, AP5S1 and AP5Z1. Interacts with ZFYVE26 and SPG11.

In terms of biological role, as part of AP-5, a probable fifth adaptor protein complex it may be involved in endosomal transport. The sequence is that of AP-5 complex subunit beta-1 (Ap5b1) from Mus musculus (Mouse).